A 286-amino-acid polypeptide reads, in one-letter code: Type II restriction enzyme NgoMIV (286 aa).

Positions 140 and 186 each coordinate Mg(2+).

As to quaternary structure, homotetramer. Mg(2+) serves as cofactor.

The catalysed reaction is Endonucleolytic cleavage of DNA to give specific double-stranded fragments with terminal 5'-phosphates.. Functionally, a P subtype restriction enzyme that recognizes the double-stranded sequence 5'-GCCGGC-3' and cleaves after G-1. The sequence is that of Type II restriction enzyme NgoMIV (ngoMIVR) from Neisseria gonorrhoeae.